We begin with the raw amino-acid sequence, 70 residues long: UPF0519 protein B (70 aa).

This sequence belongs to the UPF0519 family.

This is UPF0519 protein B (sigN122) from Dictyostelium discoideum (Social amoeba).